A 171-amino-acid polypeptide reads, in one-letter code: S-ribosylhomocysteine lyase (171 aa).

The Fe cation site is built by H54, H58, and C128.

It belongs to the LuxS family. As to quaternary structure, homodimer. The cofactor is Fe cation.

It catalyses the reaction S-(5-deoxy-D-ribos-5-yl)-L-homocysteine = (S)-4,5-dihydroxypentane-2,3-dione + L-homocysteine. Involved in the synthesis of autoinducer 2 (AI-2) which is secreted by bacteria and is used to communicate both the cell density and the metabolic potential of the environment. The regulation of gene expression in response to changes in cell density is called quorum sensing. Catalyzes the transformation of S-ribosylhomocysteine (RHC) to homocysteine (HC) and 4,5-dihydroxy-2,3-pentadione (DPD). The sequence is that of S-ribosylhomocysteine lyase from Pectobacterium atrosepticum (strain SCRI 1043 / ATCC BAA-672) (Erwinia carotovora subsp. atroseptica).